A 637-amino-acid polypeptide reads, in one-letter code: METIRLTTAQALIKFLNQQYVHSDGEEFPFVEGIFNIFGHGNVLGIGHALEQDPGHLKVYQGKNEQGMAHTAIAYSKQMLRKKIYAITTSSGPGSANLVTAAATALANQIPILLLPADTYATRQPDPVLQQFEQEQSIAITTNDALQPVSRYWDRITRPEQLMSSLIRAFEVMTDPAKAGPATICISQDVEGEAFDYDVRFFEKRVHYIDRKLPSERELKGAADLIKKSKRPLLVVGGGAKYSEAREALIAFSETFNVPLTETQAGKSAVEASFKNNLGGLGITGTLAANKAAQQADLVIGIGTRFTDFATSSKTLFDFEKVKFVNINVSRMQAYKLDAFPVVADAKRTLEALVPMLEGYKSEYGDDIGQLKAEWLKERERLGKVTFDRERFEPEIKGHFTQEVMNEYADALQTEFAQTTALLTINETIDPDSVIICAAGSLPGDLQRLWHAEVPNTYHLEYGYSCMGYEVSGTLGLKLAEPNKEVYAIVGDGSFLMLHSELVTAIQYHKKINVLLFDNSGYGCINNLQMDFGGGSYFCEFRTADEKILHVDYAKVAEGYGAKSYRVSTVEELKAALEDAKKQECSTLIDIKVLPKTMTDGYDGSWWNLGVSEVSDREGIQKAYELKQEKLTRAKQY.

Residue glutamate 65 coordinates thiamine diphosphate. The interval 441–521 is thiamine pyrophosphate binding; that stretch reads SLPGDLQRLW…INVLLFDNSG (81 aa). Mg(2+) is bound by residues aspartate 492 and asparagine 519.

The protein belongs to the TPP enzyme family. Mg(2+) serves as cofactor. Requires thiamine diphosphate as cofactor.

It carries out the reaction 3D-3,5/4-trihydroxycyclohexane-1,2-dione + H2O = 5-deoxy-D-glucuronate + H(+). It functions in the pathway polyol metabolism; myo-inositol degradation into acetyl-CoA; acetyl-CoA from myo-inositol: step 3/7. Functionally, involved in the cleavage of the C1-C2 bond of 3D-(3,5/4)-trihydroxycyclohexane-1,2-dione (THcHDO) to yield 5-deoxy-glucuronate (5DG). This Halalkalibacterium halodurans (strain ATCC BAA-125 / DSM 18197 / FERM 7344 / JCM 9153 / C-125) (Bacillus halodurans) protein is 3D-(3,5/4)-trihydroxycyclohexane-1,2-dione hydrolase.